A 520-amino-acid chain; its full sequence is 6-phosphofructo-2-kinase/fructose-2,6-bisphosphatase 3 (520 aa).

The tract at residues 1–245 (MPLELTQSRV…VYYLMNIHVQ (245 aa)) is 6-phosphofructo-2-kinase. 42–50 (GLPARGKTY) is an ATP binding site. Beta-D-fructose 6-phosphate-binding residues include Arg-75 and Arg-99. Residue Asp-125 is part of the active site. Beta-D-fructose 6-phosphate-binding residues include Thr-127 and Arg-133. The active site involves Cys-155. 164–169 (NIMEVK) lines the ATP pocket. 3 residues coordinate beta-D-fructose 6-phosphate: Lys-169, Arg-190, and Tyr-194. Residues 246–520 (PRTIYLCRHG…RSSADSSRKH (275 aa)) are fructose-2,6-bisphosphatase. Residue Arg-253 coordinates beta-D-fructose 2,6-bisphosphate. Residue His-254 is the Tele-phosphohistidine intermediate of the active site. 2 residues coordinate beta-D-fructose 2,6-bisphosphate: Asn-260 and Gly-266. Glu-323 acts as the Proton donor/acceptor in catalysis. 6 residues coordinate beta-D-fructose 2,6-bisphosphate: Tyr-334, Arg-348, Lys-352, Tyr-363, Gln-389, and Arg-393. 345-348 (YALR) contributes to the ATP binding site. Residues 389–393 (QAVLR) and Tyr-425 contribute to the ATP site. Residues 443–520 (RERSEDAKKG…RSSADSSRKH (78 aa)) form a disordered region. Ser-461 bears the Phosphoserine; by AMPK mark. Residue Thr-463 is modified to Phosphothreonine. Ser-467 carries the phosphoserine modification. Phosphothreonine; by PKC is present on Thr-471. The segment covering 502–520 (LPGQNMKGSRSSADSSRKH) has biased composition (polar residues).

This sequence in the C-terminal section; belongs to the phosphoglycerate mutase family. Homodimer. Forms a heterodimer with PFKFB2. In terms of processing, phosphorylation by AMPK stimulates activity. In terms of tissue distribution, ubiquitous.

The enzyme catalyses beta-D-fructose 2,6-bisphosphate + H2O = beta-D-fructose 6-phosphate + phosphate. The catalysed reaction is beta-D-fructose 6-phosphate + ATP = beta-D-fructose 2,6-bisphosphate + ADP + H(+). Functionally, catalyzes both the synthesis and degradation of fructose 2,6-bisphosphate. In Homo sapiens (Human), this protein is 6-phosphofructo-2-kinase/fructose-2,6-bisphosphatase 3 (PFKFB3).